The sequence spans 229 residues: Cytochrome c oxidase subunit 2 (229 aa).

At 1-14 the chain is on the mitochondrial intermembrane side; that stretch reads MAQQAQLGLQDAAS. The helical transmembrane segment at 15 to 45 threads the bilayer; the sequence is PIMEELIHFHDHTLTVVFLISVLIFYLIIVM. The Mitochondrial matrix segment spans residues 46–59; it reads VTTTFMNKHSLDSQ. Residues 60–87 traverse the membrane as a helical segment; the sequence is EVEIVWTVMPAIVLITIALPSLRILYLT. At 88-229 the chain is on the mitochondrial intermembrane side; it reads DEISNPHLTI…ENWTTKVLAS (142 aa). Histidine 161, cysteine 196, glutamate 198, cysteine 200, histidine 204, and methionine 207 together coordinate Cu cation. Glutamate 198 is a binding site for Mg(2+).

Belongs to the cytochrome c oxidase subunit 2 family. Component of the cytochrome c oxidase (complex IV, CIV), a multisubunit enzyme composed of 14 subunits. The complex is composed of a catalytic core of 3 subunits MT-CO1, MT-CO2 and MT-CO3, encoded in the mitochondrial DNA, and 11 supernumerary subunits COX4I, COX5A, COX5B, COX6A, COX6B, COX6C, COX7A, COX7B, COX7C, COX8 and NDUFA4, which are encoded in the nuclear genome. The complex exists as a monomer or a dimer and forms supercomplexes (SCs) in the inner mitochondrial membrane with NADH-ubiquinone oxidoreductase (complex I, CI) and ubiquinol-cytochrome c oxidoreductase (cytochrome b-c1 complex, complex III, CIII), resulting in different assemblies (supercomplex SCI(1)III(2)IV(1) and megacomplex MCI(2)III(2)IV(2)). Found in a complex with TMEM177, COA6, COX18, COX20, SCO1 and SCO2. Interacts with TMEM177 in a COX20-dependent manner. Interacts with COX20. Interacts with COX16. Requires Cu cation as cofactor.

The protein localises to the mitochondrion inner membrane. It catalyses the reaction 4 Fe(II)-[cytochrome c] + O2 + 8 H(+)(in) = 4 Fe(III)-[cytochrome c] + 2 H2O + 4 H(+)(out). In terms of biological role, component of the cytochrome c oxidase, the last enzyme in the mitochondrial electron transport chain which drives oxidative phosphorylation. The respiratory chain contains 3 multisubunit complexes succinate dehydrogenase (complex II, CII), ubiquinol-cytochrome c oxidoreductase (cytochrome b-c1 complex, complex III, CIII) and cytochrome c oxidase (complex IV, CIV), that cooperate to transfer electrons derived from NADH and succinate to molecular oxygen, creating an electrochemical gradient over the inner membrane that drives transmembrane transport and the ATP synthase. Cytochrome c oxidase is the component of the respiratory chain that catalyzes the reduction of oxygen to water. Electrons originating from reduced cytochrome c in the intermembrane space (IMS) are transferred via the dinuclear copper A center (CU(A)) of subunit 2 and heme A of subunit 1 to the active site in subunit 1, a binuclear center (BNC) formed by heme A3 and copper B (CU(B)). The BNC reduces molecular oxygen to 2 water molecules using 4 electrons from cytochrome c in the IMS and 4 protons from the mitochondrial matrix. The chain is Cytochrome c oxidase subunit 2 (MT-CO2) from Petromyzon marinus (Sea lamprey).